The following is a 240-amino-acid chain: MAKGFTFKQFHVDDGGCGMAVSTDGVLLGAWATLPKQGKLIDIGTGSGLLALMMAQRTAPAPCSIIAIELDDSAADAAAKNFSNSPWSSSLHCVKQDIQQWNRTQPKNNIGNIICNPPYFNFGLQADSQTRATARHTDTLTHDALLQSITHLLAPEGIVSLILPEYEGRQLIQAAEKYGLQCQRLCEVKSTEKKPVSRLLIELTSSTVKSAPQKEALCIHDSGQYSAQFIALTRDFYLKL.

This sequence belongs to the methyltransferase superfamily. tRNA (adenine-N(6)-)-methyltransferase family.

The protein localises to the cytoplasm. It carries out the reaction adenosine(37) in tRNA1(Val) + S-adenosyl-L-methionine = N(6)-methyladenosine(37) in tRNA1(Val) + S-adenosyl-L-homocysteine + H(+). Functionally, specifically methylates the adenine in position 37 of tRNA(1)(Val) (anticodon cmo5UAC). The sequence is that of tRNA1(Val) (adenine(37)-N6)-methyltransferase from Photobacterium profundum (strain SS9).